Consider the following 293-residue polypeptide: Triosephosphate isomerase (293 aa).

25 to 27 (NWK) is a binding site for substrate. The active-site Electrophile is His117. Catalysis depends on Glu218, which acts as the Proton acceptor.

The protein belongs to the triosephosphate isomerase family. In terms of assembly, homodimer.

It localises to the cytoplasm. It carries out the reaction D-glyceraldehyde 3-phosphate = dihydroxyacetone phosphate. It functions in the pathway carbohydrate biosynthesis; gluconeogenesis. It participates in carbohydrate degradation; glycolysis; D-glyceraldehyde 3-phosphate from glycerone phosphate: step 1/1. Functionally, involved in the gluconeogenesis. Catalyzes stereospecifically the conversion of dihydroxyacetone phosphate (DHAP) to D-glyceraldehyde-3-phosphate (G3P). This is Triosephosphate isomerase from Tropheryma whipplei (strain TW08/27) (Whipple's bacillus).